The following is a 135-amino-acid chain: Large ribosomal subunit protein uL16c (135 aa).

The protein belongs to the universal ribosomal protein uL16 family. In terms of assembly, part of the 50S ribosomal subunit.

It localises to the plastid. The protein localises to the chloroplast. This chain is Large ribosomal subunit protein uL16c, found in Stigeoclonium helveticum (Green alga).